Reading from the N-terminus, the 280-residue chain is Phosphatidylserine decarboxylase proenzyme (280 aa).

Catalysis depends on charge relay system; for autoendoproteolytic cleavage activity residues Asp88, His144, and Ser247. Residue Ser247 is the Schiff-base intermediate with substrate; via pyruvic acid; for decarboxylase activity of the active site. Ser247 bears the Pyruvic acid (Ser); by autocatalysis mark.

Belongs to the phosphatidylserine decarboxylase family. PSD-B subfamily. Prokaryotic type I sub-subfamily. In terms of assembly, heterodimer of a large membrane-associated beta subunit and a small pyruvoyl-containing alpha subunit. It depends on pyruvate as a cofactor. Is synthesized initially as an inactive proenzyme. Formation of the active enzyme involves a self-maturation process in which the active site pyruvoyl group is generated from an internal serine residue via an autocatalytic post-translational modification. Two non-identical subunits are generated from the proenzyme in this reaction, and the pyruvate is formed at the N-terminus of the alpha chain, which is derived from the carboxyl end of the proenzyme. The autoendoproteolytic cleavage occurs by a canonical serine protease mechanism, in which the side chain hydroxyl group of the serine supplies its oxygen atom to form the C-terminus of the beta chain, while the remainder of the serine residue undergoes an oxidative deamination to produce ammonia and the pyruvoyl prosthetic group on the alpha chain. During this reaction, the Ser that is part of the protease active site of the proenzyme becomes the pyruvoyl prosthetic group, which constitutes an essential element of the active site of the mature decarboxylase.

It localises to the cell membrane. The enzyme catalyses a 1,2-diacyl-sn-glycero-3-phospho-L-serine + H(+) = a 1,2-diacyl-sn-glycero-3-phosphoethanolamine + CO2. It functions in the pathway phospholipid metabolism; phosphatidylethanolamine biosynthesis; phosphatidylethanolamine from CDP-diacylglycerol: step 2/2. Catalyzes the formation of phosphatidylethanolamine (PtdEtn) from phosphatidylserine (PtdSer). The protein is Phosphatidylserine decarboxylase proenzyme of Stenotrophomonas maltophilia (strain R551-3).